Here is a 235-residue protein sequence, read N- to C-terminus: Ubiquinone/menaquinone biosynthesis C-methyltransferase UbiE (235 aa).

2 residues coordinate S-adenosyl-L-methionine: threonine 60 and aspartate 81.

The protein belongs to the class I-like SAM-binding methyltransferase superfamily. MenG/UbiE family.

The catalysed reaction is a 2-demethylmenaquinol + S-adenosyl-L-methionine = a menaquinol + S-adenosyl-L-homocysteine + H(+). It catalyses the reaction a 2-methoxy-6-(all-trans-polyprenyl)benzene-1,4-diol + S-adenosyl-L-methionine = a 5-methoxy-2-methyl-3-(all-trans-polyprenyl)benzene-1,4-diol + S-adenosyl-L-homocysteine + H(+). It functions in the pathway quinol/quinone metabolism; menaquinone biosynthesis; menaquinol from 1,4-dihydroxy-2-naphthoate: step 2/2. Its pathway is cofactor biosynthesis; ubiquinone biosynthesis. Methyltransferase required for the conversion of demethylmenaquinol (DMKH2) to menaquinol (MKH2) and the conversion of 2-polyprenyl-6-methoxy-1,4-benzoquinol (DDMQH2) to 2-polyprenyl-3-methyl-6-methoxy-1,4-benzoquinol (DMQH2). This Geotalea uraniireducens (strain Rf4) (Geobacter uraniireducens) protein is Ubiquinone/menaquinone biosynthesis C-methyltransferase UbiE.